The sequence spans 92 residues: C-C motif chemokine 4 (92 aa).

The N-terminal stretch at 1–23 is a signal peptide; that stretch reads MKLCVTVLSLLVLAAAFCSPALS. Cystine bridges form between cysteine 34/cysteine 58 and cysteine 35/cysteine 74.

Belongs to the intercrine beta (chemokine CC) family. Homodimer. Interacts with CCR5. In terms of tissue distribution, detected in peripheral blood mononuclear cells and lymph nodes.

It localises to the secreted. Monokine with inflammatory and chemokinetic properties. This chain is C-C motif chemokine 4 (CCL4), found in Macaca mulatta (Rhesus macaque).